The chain runs to 255 residues: Superoxide dismutase [Fe] 2, chloroplastic (255 aa).

The transit peptide at 1-32 directs the protein to the chloroplast; it reads MAAFASALRVLPSPPAAVPRRLRSREQRQGCR. Fe cation contacts are provided by His-67, His-119, Asp-203, and His-207.

This sequence belongs to the iron/manganese superoxide dismutase family. In terms of assembly, homodimer. Requires Fe cation as cofactor. In terms of tissue distribution, strongly expressed in the stems of the young seedlings, etiolated seedlings and embryogenic calli, but only minimally expressed in the leaves and the roots.

Its subcellular location is the plastid. It localises to the chloroplast. It carries out the reaction 2 superoxide + 2 H(+) = H2O2 + O2. In terms of biological role, destroys superoxide anion radicals which are normally produced within the cells and which are toxic to biological systems. The protein is Superoxide dismutase [Fe] 2, chloroplastic of Oryza sativa subsp. japonica (Rice).